Here is a 262-residue protein sequence, read N- to C-terminus: UPF0619 GPI-anchored membrane protein C1322.10 (262 aa).

Positions 1–20 (MLARVGTTLFFLANALAAYA) are cleaved as a signal peptide. Disordered stretches follow at residues 136–165 (STSA…SSST) and 175–194 (ISSS…SGSI). N-linked (GlcNAc...) asparagine glycans are attached at residues Asn-207 and Asn-227. Asn-242 is lipidated: GPI-like-anchor amidated asparagine. Positions 243 to 262 (GVAQLSVAACMGIAALMLIA) are cleaved as a propeptide — removed in mature form.

It belongs to the UPF0619 family.

Its subcellular location is the golgi apparatus membrane. The protein resides in the cell membrane. This Schizosaccharomyces pombe (strain 972 / ATCC 24843) (Fission yeast) protein is UPF0619 GPI-anchored membrane protein C1322.10.